Reading from the N-terminus, the 419-residue chain is 5-methylthioadenosine/S-adenosylhomocysteine deaminase (419 aa).

Zn(2+)-binding residues include His-58 and His-60. The substrate site is built by Glu-87 and His-179. Residue His-206 participates in Zn(2+) binding. Substrate is bound by residues Glu-209 and Asp-294. Residue Asp-294 coordinates Zn(2+).

Belongs to the metallo-dependent hydrolases superfamily. MTA/SAH deaminase family. Requires Zn(2+) as cofactor.

The enzyme catalyses S-adenosyl-L-homocysteine + H2O + H(+) = S-inosyl-L-homocysteine + NH4(+). The catalysed reaction is S-methyl-5'-thioadenosine + H2O + H(+) = S-methyl-5'-thioinosine + NH4(+). Its function is as follows. Catalyzes the deamination of 5-methylthioadenosine and S-adenosyl-L-homocysteine into 5-methylthioinosine and S-inosyl-L-homocysteine, respectively. Is also able to deaminate adenosine. In Pyrococcus furiosus (strain ATCC 43587 / DSM 3638 / JCM 8422 / Vc1), this protein is 5-methylthioadenosine/S-adenosylhomocysteine deaminase.